The sequence spans 495 residues: MFS transporter prlL (495 aa).

The disordered stretch occupies residues 1–24 (MAQSFANEHDPAKRAEERGHVGTI). Residues 7 to 20 (NEHDPAKRAEERGH) show a composition bias toward basic and acidic residues. Transmembrane regions (helical) follow at residues 102–122 (IALMIFFLAYGLFEVPSNVLL), 130–150 (WIAILMFSWGAISMGLAGAHN), 159–179 (FLLGIFEAGLFPGLVYYLTFW), 189–209 (VAFILASATLAGAFGGAIAYA), 224–244 (WLFIIEGAPSCVSALFVLFFL), 292–312 (LWAHYLIYFGISTPFSSLSLF), 329–349 (LMTVPPYAVAYVVQILVSWSA), 356–376 (GLHSAASATVGACGFLASAVL), 386–406 (GCLIVAAAGAFACIPPLLGWL), 418–438 (LAIALNIGLGGAPGQIAGVWI), and 449–469 (PTGHWVNAGLLFFVAVACVAL).

Belongs to the major facilitator superfamily.

The protein localises to the cell membrane. Functionally, efflux pump that might be required for efficient secretion of pyrrolocin or other secondary metabolies produced by the pyrrolocin gene cluster. The polypeptide is MFS transporter prlL (Fungal sp. (strain NRRL 50135)).